The chain runs to 357 residues: Ribosomal RNA small subunit methyltransferase C (357 aa).

It belongs to the methyltransferase superfamily. RsmC family. In terms of assembly, monomer.

It localises to the cytoplasm. It catalyses the reaction guanosine(1207) in 16S rRNA + S-adenosyl-L-methionine = N(2)-methylguanosine(1207) in 16S rRNA + S-adenosyl-L-homocysteine + H(+). Its function is as follows. Specifically methylates the guanine in position 1207 of 16S rRNA in the 30S particle. The protein is Ribosomal RNA small subunit methyltransferase C of Colwellia psychrerythraea (strain 34H / ATCC BAA-681) (Vibrio psychroerythus).